Here is a 509-residue protein sequence, read N- to C-terminus: MFS antiporter QDR1 (509 aa).

The Cytoplasmic portion of the chain corresponds to 1 to 41 (MPGNREEFDIEKVLKSKKLEAIETSTEKKAPYTVFESTDKL). Residues 42–62 (LLIIVLSLVGFWSAISSPIYF) traverse the membrane as a helical segment. The Extracellular segment spans residues 63–75 (PALPTLTKYFNTT). Residues 76-96 (PSVMNISVVAYLIFQGIAPTI) form a helical membrane-spanning segment. Over 97–106 (SSNLADTFGR) the chain is Cytoplasmic. Residues 107–129 (RPVILGSIIVFCAVCIAISQTNV) traverse the membrane as a helical segment. At 130–132 (YWL) the chain is on the extracellular side. The helical transmembrane segment at 133–155 (LALLRCFQAAGIAPVFAISSGVA) threads the bilayer. Over 156–169 (GDICTPANRGGMVG) the chain is Cytoplasmic. A helical transmembrane segment spans residues 170-190 (AVSGLQLAGNGIGGLVGAALI). The Extracellular portion of the chain corresponds to 191 to 197 (SGFHTWR). Residues 198 to 218 (AIFIFLAIGGGVTFIFAFLVL) traverse the membrane as a helical segment. Over 219-278 (AETSRRIVGNGSIRPKNVLNKAVLIYLPHFKNKITNDYSTLQPKGPFDILGPFKIFFQKE) the chain is Cytoplasmic. The chain crosses the membrane as a helical span at residues 279 to 299 (VFCTLLPSGMHFAAWTVSLTS). The Extracellular portion of the chain corresponds to 300-312 (LSTELESAKYNYS). A helical transmembrane segment spans residues 313–333 (VMKVGLVYLPQGIACFIGSLI). At 334–370 (AGRCLNWYYRYRKNLYDKQMNDVPLNDRPPFNLVASR) the chain is on the cytoplasmic side. Residues 371 to 391 (LTLTIVPLAMMVIGLSAFGWC) traverse the membrane as a helical segment. Residues 392–397 (LEYKKP) are Extracellular-facing. Residues 398–418 (IISIIISTILISFSASVMMSI) traverse the membrane as a helical segment. Over 419 to 432 (CTTMLVDLYPKQSG) the chain is Cytoplasmic. Residues 433-453 (ASASCVNLMRCWLAALFTGVL) form a helical membrane-spanning segment. Topologically, residues 454 to 455 (DK) are extracellular. Residues 456-476 (IISALGLGGTYTLLTGICLLT) form a helical membrane-spanning segment. Residues 477–509 (DLGLVYVLYTANQRFVNYVSPNQTAVNSDAEDY) are Cytoplasmic-facing.

The protein belongs to the major facilitator superfamily. CAR1 family.

The protein localises to the cell membrane. In terms of biological role, MFS antiporter that does not display functional linkage as drug transporter and performs functions that significantly affect biofilm development and virulence. No substrate for transport has been identified yet, but plays an important role in the growth in the host. The chain is MFS antiporter QDR1 (QDR) from Candida albicans (strain SC5314 / ATCC MYA-2876) (Yeast).